Here is a 232-residue protein sequence, read N- to C-terminus: uncharacterized protein (232 aa).

Transmembrane regions (helical) follow at residues 69–91, 104–126, 139–161, 166–188, and 200–219; these read LISA…YILF, FLEP…FFAL, FSRF…FFFL, ICFT…AMLS, and FIYS…QLII.

The protein localises to the cell membrane. This is an uncharacterized protein from Bacillus subtilis (strain 168).